The sequence spans 896 residues: Chromatin assembly factor 1 subunit A-A (896 aa).

Disordered stretches follow at residues 1–23, 185–377, and 552–610; these read MPGK…KKMV, TSTS…EEEK, and DSDE…DPEN. Positions 10–21 are enriched in polar residues; the sequence is VMQSSTKSNTKK. Over residues 211 to 226 the composition is skewed to low complexity; sequence ASVSSSSSPVSLSSPD. Over residues 227-236 the composition is skewed to polar residues; that stretch reads AQTGSQFRNR. Positions 237-246 are enriched in low complexity; it reads SSPSTSTTPT. Over residues 255–284 the composition is skewed to basic and acidic residues; sequence SADKNKTKDKDKQRQAEKEERERAKKEARS. The span at 285 to 302 shows a compositional bias: basic residues; the sequence is AKKKKRQGLLKNLQRKRG. Basic and acidic residues predominate over residues 308-377; the sequence is SGKEYKKEKK…EEKRLKEEEK (70 aa). Composition is skewed to acidic residues over residues 552–563, 572–586, and 595–607; these read DSDEEWEEEEPG, ENDD…DDDG, and SDDE…ECTD. The tract at residues 642–678 is necessary for homodimerization, competence for chromatin assembly; that stretch reads CVWWDSKASEISLLQKFSACILESPAVDEELAQEISS. Positions 724 to 743 are disordered; the sequence is SDAAGNESTSPNVTPQTPSN. Over residues 729–743 the composition is skewed to polar residues; that stretch reads NESTSPNVTPQTPSN.

This sequence belongs to the CHAF1A family. As to quaternary structure, homodimer.

It is found in the nucleus. In terms of biological role, involved in chromatin assembly in DNA replication and DNA repair. In Xenopus laevis (African clawed frog), this protein is Chromatin assembly factor 1 subunit A-A (chaf1a-a).